The sequence spans 160 residues: Large ribosomal subunit protein uL10 (160 aa).

It belongs to the universal ribosomal protein uL10 family. Part of the ribosomal stalk of the 50S ribosomal subunit. The N-terminus interacts with L11 and the large rRNA to form the base of the stalk. The C-terminus forms an elongated spine to which L12 dimers bind in a sequential fashion forming a multimeric L10(L12)X complex.

Its function is as follows. Forms part of the ribosomal stalk, playing a central role in the interaction of the ribosome with GTP-bound translation factors. The polypeptide is Large ribosomal subunit protein uL10 (Ehrlichia canis (strain Jake)).